The following is a 240-amino-acid chain: Probable transcriptional regulatory protein MADE_1004275 (240 aa).

This sequence belongs to the TACO1 family.

The protein localises to the cytoplasm. The polypeptide is Probable transcriptional regulatory protein MADE_1004275 (Alteromonas mediterranea (strain DSM 17117 / CIP 110805 / LMG 28347 / Deep ecotype)).